Consider the following 1117-residue polypeptide: Sodium-driven chloride bicarbonate exchanger (1117 aa).

The segment covering 1 to 14 (MQSGTCESFQSLSH) has biased composition (polar residues). Disordered stretches follow at residues 1–26 (MQSG…VDRG), 57–94 (GRKS…FDTP), 244–312 (KQSE…PHQQ), and 456–475 (NGTA…GPEL). Topologically, residues 1-508 (MQSGTCESFQ…DFTDALSLQC (508 aa)) are cytoplasmic. Positions 15 to 26 (QRNDEEAVVDRG) are enriched in basic and acidic residues. The span at 58–75 (RKSHRRHRHRGHKHRKRD) shows a compositional bias: basic residues. Positions 76–89 (RERDSGLEDGRESP) are enriched in basic and acidic residues. S88 carries the phosphoserine modification. T93 carries the phosphothreonine modification. The span at 247 to 263 (EPNSMDKNAGQVVSPQS) shows a compositional bias: polar residues. S275 carries the post-translational modification Phosphoserine. Residues 509-529 (LASFLFLYCACMSPVITFGGL) traverse the membrane as a helical segment. Topologically, residues 530–537 (LGEATEGR) are extracellular. A helical transmembrane segment spans residues 538–558 (ISAIESLFGASMTGIAYSLFG). Residues 559–561 (GQP) are Cytoplasmic-facing. The chain crosses the membrane as a helical span at residues 562–582 (LTILGSTGPVLVFEKILFKFC). The Extracellular segment spans residues 583–595 (KEYGLSYLSLRAS). The chain crosses the membrane as a helical span at residues 596-616 (IGLWTATLCIILVATDASSLV). Over 617–625 (CYITRFTEE) the chain is Cytoplasmic. A helical membrane pass occupies residues 626 to 646 (AFASLICIIFIYEALEKLFEL). Topologically, residues 647-719 (SEAYPINMHN…VGRACGHEHP (73 aa)) are extracellular. Residues N673, N676, N686, and N696 are each glycosylated (N-linked (GlcNAc...) asparagine). A helical membrane pass occupies residues 720–740 (YVPDVLFWSVILFFSTVTLSA). Over 741–761 (TLKQFKTSRYFPTKVRSIVSD) the chain is Cytoplasmic. The helical transmembrane segment at 762–782 (FAVFLTILCMVLIDYAIGIPS) threads the bilayer. At 783-808 (PKLQVPSVFKPTRDDRGWFVTPLGPN) the chain is on the extracellular side. A helical membrane pass occupies residues 809 to 829 (PWWTVIAAIIPALLCTILIFM). The Cytoplasmic portion of the chain corresponds to 830–854 (DQQITAVIINRKEHKLKKGCGYHLD). A helical membrane pass occupies residues 855 to 875 (LLMVAVMLGVCSIMGLPWFVA). The Extracellular portion of the chain corresponds to 876-911 (ATVLSITHVNSLKLESECSAPGEQPKFLGIREQRVT). Residues 912 to 932 (GLMIFILMGSSVFMTSILKFI) traverse the membrane as a helical segment. At 933 to 934 (PM) the chain is on the cytoplasmic side. Residues 935 to 955 (PVLYGVFLYMGASSLKGIQFF) form a helical membrane-spanning segment. At 956 to 997 (DRIKLFWMPAKHQPDFIYLRHVPLRKVHLFTVIQMSCLGLLW) the chain is on the extracellular side. Residues 998–1018 (IIKVSRAAIVFPMMVLALVFV) form a helical membrane-spanning segment. Residues 1019-1117 (RKLMDFLFTK…SSFPSKSSPS (99 aa)) are Cytoplasmic-facing. S1056 and S1084 each carry phosphoserine.

It belongs to the anion exchanger (TC 2.A.31) family. In terms of processing, N-glycosylated.

The protein localises to the basolateral cell membrane. It is found in the apical cell membrane. Its subcellular location is the cell projection. It localises to the dendrite. The protein resides in the axon. The protein localises to the perikaryon. It is found in the presynapse. Its subcellular location is the postsynapse. In terms of biological role, sodium/bicarbonate cotransporter which plays an important role in regulating intracellular pH. Has been shown to act as a sodium/bicarbonate cotransporter in exchange for intracellular chloride. Has also been shown to act as a sodium/biocarbonate cotransporter which does not couple net influx of bicarbonate to net efflux of chloride, with the observed chloride efflux being due to chloride self-exchange. Controls neuronal pH and may contribute to the secretion of cerebrospinal fluid. Acting on presynaptic intracellular pH, it promotes GABA release, reduces the excitability of CA1 pyramidal neurons, and modulates short-term synaptic plasticity. Required in retinal cells to maintain normal pH which is necessary for normal vision. In the kidney, likely to mediate bicarbonate reclamation in the apical membrane of the proximal tubules. This is Sodium-driven chloride bicarbonate exchanger from Bos taurus (Bovine).